Reading from the N-terminus, the 96-residue chain is Large ribosomal subunit protein uL23 (96 aa).

Belongs to the universal ribosomal protein uL23 family. Part of the 50S ribosomal subunit. Contacts protein L29, and trigger factor when it is bound to the ribosome.

Its function is as follows. One of the early assembly proteins it binds 23S rRNA. One of the proteins that surrounds the polypeptide exit tunnel on the outside of the ribosome. Forms the main docking site for trigger factor binding to the ribosome. This Bacillus cytotoxicus (strain DSM 22905 / CIP 110041 / 391-98 / NVH 391-98) protein is Large ribosomal subunit protein uL23.